The following is a 306-amino-acid chain: Ornithine carbamoyltransferase (306 aa).

Residues 50–53 (STRT), Gln-77, Arg-101, and 128–131 (HPCQ) each bind carbamoyl phosphate. L-ornithine is bound by residues Asn-160, Asp-224, and 228–229 (SM). Carbamoyl phosphate-binding positions include 264-265 (CL) and Arg-292.

It belongs to the aspartate/ornithine carbamoyltransferase superfamily. OTCase family.

The protein localises to the cytoplasm. The enzyme catalyses carbamoyl phosphate + L-ornithine = L-citrulline + phosphate + H(+). It participates in amino-acid biosynthesis; L-arginine biosynthesis; L-arginine from L-ornithine and carbamoyl phosphate: step 1/3. Its function is as follows. Reversibly catalyzes the transfer of the carbamoyl group from carbamoyl phosphate (CP) to the N(epsilon) atom of ornithine (ORN) to produce L-citrulline. This Mycobacterium leprae (strain TN) protein is Ornithine carbamoyltransferase.